The following is a 371-amino-acid chain: Gamma-tocopherol methyltransferase, chloroplastic (371 aa).

The transit peptide at 1-65 (MAAAPVFFPS…NSNRIASRLQ (65 aa)) directs the protein to the chloroplast. Residues 153–162 (IVDVGCGIGG) are SAM motif I. The SAM motif II stretch occupies residues 216–224 (GQFDLVWSM). An SAM motif III region spans residues 243-252 (VAAPGATIII).

This sequence belongs to the class I-like SAM-binding methyltransferase superfamily. gTMT family. As to quaternary structure, homodimer.

Its subcellular location is the plastid. It is found in the chloroplast inner membrane. The catalysed reaction is picrinine + S-adenosyl-L-methionine = ervincine + S-adenosyl-L-homocysteine + H(+). The protein operates within alkaloid biosynthesis; vindoline biosynthesis. S-adenosyl-L-methionine-dependent N-methyltransferase involved in the biosynthesis of biologically active monoterpenoid indole alkaloids (MIAs) natural products including vindoline. Inactive with picrinine as substrate. This is Gamma-tocopherol methyltransferase, chloroplastic from Catharanthus roseus (Madagascar periwinkle).